We begin with the raw amino-acid sequence, 193 residues long: CASP-like protein 1E1 (193 aa).

Residues 1 to 30 are Cytoplasmic-facing; it reads MESQNKASLPVMDGLERRVVASQSEGASTC. A helical membrane pass occupies residues 31–51; the sequence is DLLLRVLALVLTLAAAIVLGV. The Extracellular portion of the chain corresponds to 52-86; it reads DKQTKVVPIKIVDTLPAINLPVSAKWHYLSAFTYS. The chain crosses the membrane as a helical span at residues 87–107; it reads VASNAIACSYAALSLVLAVSG. Residues 108 to 113 lie on the Cytoplasmic side of the membrane; that stretch reads KKGIMS. The chain crosses the membrane as a helical span at residues 114–134; sequence IVIVLDLLMVAMLFSSNGAAL. Residues 135-162 are Extracellular-facing; that stretch reads AIGLMGYQGNSHVRWTKVCHVFGRFCNQ. The chain crosses the membrane as a helical span at residues 163–183; that stretch reads VAVSISLSLLGSILFLLLVGI. The Cytoplasmic portion of the chain corresponds to 184–193; sequence TSLRLHKKSK.

The protein belongs to the Casparian strip membrane proteins (CASP) family. In terms of assembly, homodimer and heterodimers.

The protein resides in the cell membrane. The protein is CASP-like protein 1E1 of Populus trichocarpa (Western balsam poplar).